A 214-amino-acid polypeptide reads, in one-letter code: Eukaryotic translation initiation factor 4E-1B (214 aa).

MRNA contacts are provided by residues 53–54, 99–100, 154–159, and 202–204; these read WQ, WE, RAKGDK, and TKS.

Ovary, muscle and testis.

It is found in the cytoplasm. It localises to the nucleus. Functionally, does not appear to be a mRNA-cap-binding protein. This chain is Eukaryotic translation initiation factor 4E-1B, found in Danio rerio (Zebrafish).